The sequence spans 232 residues: Large ribosomal subunit protein uL1 (232 aa).

Belongs to the universal ribosomal protein uL1 family. As to quaternary structure, part of the 50S ribosomal subunit.

Functionally, binds directly to 23S rRNA. The L1 stalk is quite mobile in the ribosome, and is involved in E site tRNA release. Its function is as follows. Protein L1 is also a translational repressor protein, it controls the translation of the L11 operon by binding to its mRNA. The polypeptide is Large ribosomal subunit protein uL1 (Xanthomonas oryzae pv. oryzae (strain MAFF 311018)).